The sequence spans 208 residues: MVLAAIFFGGTPILATAMAYPLAICAACVITSIIGTFFVKLGTNNSIMGALYKGLIVTGALSILGLGAATSFTIGWGSIGTVGGIEVRGGNLFVCGLIGLVVTALIVVITEYYTGTNKRPVNSIAQASVTGHGTNVIQGLAVSLESTALPAIVIVGGIIATYQLAGLFGTAIAVTAMLGLAGMIVALDAFGPVTDNAGGIAEMSHLSP.

Transmembrane regions (helical) follow at residues 19–39 (AYPL…TFFV), 54–74 (GLIV…SFTI), 89–109 (GGNL…IVVI), 140–160 (LAVS…GIIA), and 167–187 (LFGT…IVAL).

This sequence belongs to the H(+)-translocating pyrophosphatase (TC 3.A.10) family. In terms of assembly, homodimer. Mg(2+) serves as cofactor.

The protein resides in the cell inner membrane. The enzyme catalyses diphosphate + H2O + H(+)(in) = 2 phosphate + 2 H(+)(out). Proton pump that utilizes the energy of pyrophosphate hydrolysis as the driving force for proton movement across the membrane. Generates a proton motive force. In Mycoplana dimorpha, this protein is Pyrophosphate-energized proton pump 2 (hppA2).